The sequence spans 94 residues: DNA-directed RNA polymerase subunit omega (94 aa).

The protein belongs to the RNA polymerase subunit omega family. In terms of assembly, the RNAP catalytic core consists of 2 alpha, 1 beta, 1 beta' and 1 omega subunit. When a sigma factor is associated with the core the holoenzyme is formed, which can initiate transcription.

The enzyme catalyses RNA(n) + a ribonucleoside 5'-triphosphate = RNA(n+1) + diphosphate. Promotes RNA polymerase assembly. Latches the N- and C-terminal regions of the beta' subunit thereby facilitating its interaction with the beta and alpha subunits. This is DNA-directed RNA polymerase subunit omega from Frankia alni (strain DSM 45986 / CECT 9034 / ACN14a).